We begin with the raw amino-acid sequence, 178 residues long: tRNA (cytidine(56)-2'-O)-methyltransferase (178 aa).

Residues leucine 84, 109–113, and 127–134 each bind S-adenosyl-L-methionine; these read GAEKV and IGNQPHSE.

The protein belongs to the aTrm56 family. In terms of assembly, homodimer.

The protein resides in the cytoplasm. It carries out the reaction cytidine(56) in tRNA + S-adenosyl-L-methionine = 2'-O-methylcytidine(56) in tRNA + S-adenosyl-L-homocysteine + H(+). Functionally, specifically catalyzes the AdoMet-dependent 2'-O-ribose methylation of cytidine at position 56 in tRNAs. The sequence is that of tRNA (cytidine(56)-2'-O)-methyltransferase from Methanococcoides burtonii (strain DSM 6242 / NBRC 107633 / OCM 468 / ACE-M).